A 455-amino-acid chain; its full sequence is MVESTTLVNQTWWYNPTVDIHPHWAKFDPIPDAVYYSVGIFIGVVGIIGILGNGVVIYLFSKTKSLQTPANMFIINLAMSDLSFSAINGFPLKTISAFMKKWIFGKVACQLYGLLGGIFGFMSINTMAMISIDRYNVIGRPMAASKKMSHRRAFLMIIFVWMWSIVWSVGPVFNWGAYVPEGILTSCSFDYLSTDPSTRSFILCMYFCGFMLPIIIIAFCYFNIVMSVSNHEKEMAAMAKRLNAKELRKAQAGASAEMKLAKISMVIITQFMLSWSPYAIIALLAQFGPAEWVTPYAAELPVLFAKASAIHNPIVYSVSHPKFREAIQTTFPWLLTCCQFDEKECEDANDAEEEVVASERGGESRDAAQMKEMMAMMQKMQAQQAAYQPPPPPQGYPPQGYPPQGAYPPPQGYPPQGYPPQGYPPQGYPPQGAPPQVEAPQGAPPQGVDNQAYQA.

At 1-34 (MVESTTLVNQTWWYNPTVDIHPHWAKFDPIPDAV) the chain is on the extracellular side. N9 carries an N-linked (GlcNAc...) asparagine glycan. Residues 35–59 (YYSVGIFIGVVGIIGILGNGVVIYL) form a helical membrane-spanning segment. Over 60 to 71 (FSKTKSLQTPAN) the chain is Cytoplasmic. A helical transmembrane segment spans residues 72–98 (MFIINLAMSDLSFSAINGFPLKTISAF). The Extracellular segment spans residues 99-110 (MKKWIFGKVACQ). C109 and C187 are disulfide-bonded. Residues 111-132 (LYGLLGGIFGFMSINTMAMISI) form a helical membrane-spanning segment. The short motif at 133 to 135 (DRY) is the 'Ionic lock' involved in activated form stabilization element. The Cytoplasmic portion of the chain corresponds to 133–152 (DRYNVIGRPMAASKKMSHRR). The helical transmembrane segment at 153–173 (AFLMIIFVWMWSIVWSVGPVF) threads the bilayer. Topologically, residues 174–200 (NWGAYVPEGILTSCSFDYLSTDPSTRS) are extracellular. A helical membrane pass occupies residues 201 to 225 (FILCMYFCGFMLPIIIIAFCYFNIV). The Cytoplasmic portion of the chain corresponds to 226-262 (MSVSNHEKEMAAMAKRLNAKELRKAQAGASAEMKLAK). A helical transmembrane segment spans residues 263–284 (ISMVIITQFMLSWSPYAIIALL). Residues 285 to 294 (AQFGPAEWVT) are Extracellular-facing. Residues 295–316 (PYAAELPVLFAKASAIHNPIVY) traverse the membrane as a helical segment. K306 carries the post-translational modification N6-(retinylidene)lysine. At 317-455 (SVSHPKFREA…QGVDNQAYQA (139 aa)) the chain is on the cytoplasmic side. 2 S-palmitoyl cysteine lipidation sites follow: C337 and C338. Residues 378–387 (QKMQAQQAAY) show a composition bias toward low complexity. The disordered stretch occupies residues 378 to 455 (QKMQAQQAAY…QGVDNQAYQA (78 aa)). Over residues 388 to 433 (QPPPPPQGYPPQGYPPQGAYPPPQGYPPQGYPPQGYPPQGYPPQGA) the composition is skewed to pro residues. Repeat copies occupy residues 395–399 (GYPPQ), 400–404 (GYPPQ), 412–416 (GYPPQ), 417–421 (GYPPQ), 422–426 (GYPPQ), and 427–431 (GYPPQ). The interval 395 to 431 (GYPPQGYPPQGAYPPPQGYPPQGYPPQGYPPQGYPPQ) is 6 X 5 AA repeats of G-Y-P-P-Q.

The protein belongs to the G-protein coupled receptor 1 family. Opsin subfamily. Post-translationally, contains one covalently linked retinal chromophore. Upon light absorption, the covalently bound 11-cis-retinal is converted to all-trans-retinal. After hydrolysis of the Schiff base and release of the covalently bound all-trans-retinal, active rhodopsin is regenerated by binding of a fresh molecule of 11-cis-retinal.

It is found in the cell projection. The protein localises to the rhabdomere membrane. Functionally, photoreceptor required for image-forming vision at low light intensity. Light-induced isomerization of 11-cis to all-trans retinal triggers a conformational change that activates signaling via G-proteins. Signaling mediates the activation of phospholipase C. Subsequent receptor phosphorylation mediates displacement of the bound G-protein alpha subunit by arrestin and terminates signaling. In Enteroctopus dofleini (North Pacific giant octopus), this protein is Rhodopsin (RHO).